We begin with the raw amino-acid sequence, 141 residues long: uncharacterized protein (141 aa).

The HIT domain maps to 10-117; it reads IFCDIVQGSI…VPKYETGKGF (108 aa). Residues 102–106 carry the Histidine triad motif motif; that stretch reads HFHLH.

This is an uncharacterized protein from Mycoplasma genitalium (strain ATCC 33530 / DSM 19775 / NCTC 10195 / G37) (Mycoplasmoides genitalium).